A 529-amino-acid polypeptide reads, in one-letter code: Methionine--tRNA ligase (529 aa).

Positions 12–22 match the 'HIGH' region motif; that stretch reads YYVNALPHIGS. Positions 127, 130, 145, and 148 each coordinate Zn(2+). Positions 301–305 match the 'KMSKS' region motif; that stretch reads KMGKS. Lys304 lines the ATP pocket.

It belongs to the class-I aminoacyl-tRNA synthetase family. MetG type 2A subfamily. As to quaternary structure, monomer. Zn(2+) serves as cofactor.

Its subcellular location is the cytoplasm. It catalyses the reaction tRNA(Met) + L-methionine + ATP = L-methionyl-tRNA(Met) + AMP + diphosphate. In terms of biological role, is required not only for elongation of protein synthesis but also for the initiation of all mRNA translation through initiator tRNA(fMet) aminoacylation. The chain is Methionine--tRNA ligase from Thermosynechococcus vestitus (strain NIES-2133 / IAM M-273 / BP-1).